Consider the following 790-residue polypeptide: MFEVKMGSKMCMNASCGTTSTVEWKKGWPLRSGLLADLCYRCGSAYESSLFCEQFHKDQSGWRECYLCSKRLHCGCIASKVTIELMDYGGVGCSTCACCHQLNLNTRGENPGVFSRLPMKTLADRQHVNGESGGRNEGDLFSQPLVMGGDKREEFMPHRGFGKLMSPESTTTGHRLDAAGEMHESSPLQPSLNMGLAVNPFSPSFATEAVEGMKHISPSQSNMVHCSASNILQKPSRPAISTPPVASKSAQARIGRPPVEGRGRGHLLPRYWPKYTDKEVQQISGNLNLNIVPLFEKTLSASDAGRIGRLVLPKACAEAYFPPISQSEGIPLKIQDVRGREWTFQFRYWPNNNSRMYVLEGVTPCIQSMMLQAGDTVTFSRVDPGGKLIMGSRKAANAGDMQGCGLTNGTSTEDTSSSGVTENPPSINGSSCISLIPKELNGMPENLNSETNGGRIGDDPTRVKEKKRTRTIGAKNKRLLLHSEESMELRLTWEEAQDLLRPSPSVKPTIVVIEEQEIEEYDEPPVFGKRTIVTTKPSGEQERWATCDDCSKWRRLPVDALLSFKWTCIDNVWDVSRCSCSAPEESLKELENVLKVGREHKKRRTGESQAAKSQQEPCGLDALASAAVLGDTIGEPEVATTTRHPRHRAGCSCIVCIQPPSGKGRHKPTCGCTVCSTVKRRFKTLMMRRKKKQLERDVTAAEDKKKKDMELAESDKSKEEKEVNTARIDLNSDPYNKEDVEAVAVEKEESRKRAIGQCSGVVAQDASDVLGVTELEGEGKNVREEPRVSS.

Residues 234–260 (KPSRPAISTPPVASKSAQARIGRPPVE) are disordered. Residues 295–396 (FEKTLSASDA…KLIMGSRKAA (102 aa)) constitute a DNA-binding region (TF-B3). Disordered regions lie at residues 400-429 (DMQGCGLTNGTSTEDTSSSGVTENPPSING) and 446-468 (NLNSETNGGRIGDDPTRVKEKKR). A compositionally biased stretch (polar residues) spans 405 to 429 (GLTNGTSTEDTSSSGVTENPPSING). The CW-type zinc-finger motif lies at 538-588 (SGEQERWATCDDCSKWRRLPVDALLSFKWTCIDNVWDVSRCSCSAPEESLK). Zn(2+) is bound by residues Cys547, Cys550, Cys568, and Cys580. Residues 685–732 (LMMRRKKKQLERDVTAAEDKKKKDMELAESDKSKEEKEVNTARIDLNS) adopt a coiled-coil conformation. A disordered region spans residues 689-737 (RKKKQLERDVTAAEDKKKKDMELAESDKSKEEKEVNTARIDLNSDPYNK). Basic and acidic residues predominate over residues 694–724 (LERDVTAAEDKKKKDMELAESDKSKEEKEVN).

Interacts with SNL1. Expressed in flowers and at lower levels in roots, stems and leaves.

The protein resides in the nucleus. Transcriptional repressor of gene expression involved in embryonic pathways, such as LEC1, ABI3, and FUS3. Repressor of the sugar-inducible genes involved in the seed maturation program in seedlings. Plays an essential role in regulating the transition from seed maturation to seedling growth. Functionally redundant with VAL2/HSL1. The polypeptide is B3 domain-containing transcription repressor VAL1 (VAL1) (Arabidopsis thaliana (Mouse-ear cress)).